The following is a 960-amino-acid chain: RNA polymerase II subunit A C-terminal domain phosphatase (960 aa).

Met1 bears the N-acetylmethionine mark. Residues 178–341 (HRNRKLVLMV…PPAARETQAR (164 aa)) form the FCP1 homology domain. The interval 331–580 (APPAARETQA…EEDTDDDDHL (250 aa)) is disordered. The span at 439-448 (PGVQPTQGDA) shows a compositional bias: polar residues. Acidic residues predominate over residues 453–463 (LDFDLSSDSES). Phosphoserine is present on Ser530. The span at 547-556 (ESQNSEQSGV) shows a compositional bias: polar residues. Residues 566–578 (VGEEEEEDTDDDD) are compositionally biased toward acidic residues. The region spanning 619–718 (LKSKVLADVA…DKVEEQLFPL (100 aa)) is the BRCT domain. Phosphoserine occurs at positions 664 and 730. Lys770 carries the post-translational modification N6-acetyllysine. Disordered stretches follow at residues 770–834 (KLIR…MSEA) and 854–948 (DILG…ADEM). Residues Ser830, Ser860, and Ser863 each carry the phosphoserine modification. Acidic residues predominate over residues 854–864 (DILGEGSDDSD). The segment covering 865–881 (IEKKKPEDQDNEQERAP) has biased composition (basic and acidic residues). A compositionally biased stretch (acidic residues) spans 934-947 (SNDDEEGSSSEADE).

Homodimer. Interacts with GTF2F1. Interacts with WDR77, SNRPB and SNRNP70. Post-translationally, phosphorylated. In the presence of TFIIF, the phosphorylated form has an increased CTD phosphatase activity. The phosphorylation is required for the physical interaction with GTF2F1.

It is found in the nucleus. It localises to the cytoplasm. Its subcellular location is the cytoskeleton. The protein resides in the microtubule organizing center. The protein localises to the centrosome. It is found in the spindle. It localises to the spindle pole. Its subcellular location is the midbody. It catalyses the reaction O-phospho-L-seryl-[protein] + H2O = L-seryl-[protein] + phosphate. The enzyme catalyses O-phospho-L-threonyl-[protein] + H2O = L-threonyl-[protein] + phosphate. Its function is as follows. Processively dephosphorylates 'Ser-2' and 'Ser-5' of the heptad repeats YSPTSPS in the C-terminal domain of the largest RNA polymerase II subunit. This promotes the activity of RNA polymerase II. Plays a role in the exit from mitosis by dephosphorylating crucial mitotic substrates (USP44, CDC20 and WEE1) that are required for M-phase-promoting factor (MPF)/CDK1 inactivation. The polypeptide is RNA polymerase II subunit A C-terminal domain phosphatase (Ctdp1) (Mus musculus (Mouse)).